The sequence spans 333 residues: Cytosolic Fe-S cluster assembly factor NBP35 (333 aa).

Positions 32, 46, 49, and 55 each coordinate [4Fe-4S] cluster. Residue 85–92 (GKGGVGKS) participates in ATP binding. C258 and C261 together coordinate [4Fe-4S] cluster.

The protein belongs to the Mrp/NBP35 ATP-binding proteins family. NUBP1/NBP35 subfamily. In terms of assembly, heterotetramer of 2 NBP35 and 2 CFD1 chains. It depends on [4Fe-4S] cluster as a cofactor.

It localises to the cytoplasm. The protein resides in the nucleus. Component of the cytosolic iron-sulfur (Fe/S) protein assembly (CIA) machinery. Required for maturation of extramitochondrial Fe-S proteins. The NBP35-CFD1 heterotetramer forms a Fe-S scaffold complex, mediating the de novo assembly of an Fe-S cluster and its transfer to target apoproteins. Required for biogenesis and export of both ribosomal subunits, which may reflect a role in assembly of the Fe/S clusters in RLI1, a protein which performs rRNA processing and ribosome export. The sequence is that of Cytosolic Fe-S cluster assembly factor NBP35 from Eremothecium gossypii (strain ATCC 10895 / CBS 109.51 / FGSC 9923 / NRRL Y-1056) (Yeast).